A 503-amino-acid polypeptide reads, in one-letter code: TGF-beta receptor type-1 (503 aa).

Residues 1-29 (MEAAAAAPRRPQLLIVLVAAATLLPGAKA) form the signal peptide. Residues 30–126 (LQCFCHLCTK…QSAGLGPVEL (97 aa)) lie on the Extracellular side of the membrane. Cystine bridges form between C32–C50, C34–C37, C44–C67, C82–C96, and C97–C102. The N-linked (GlcNAc...) asparagine glycan is linked to N41. Residues 127–147 (AAVIAGPVCFVCIALMLMVYI) traverse the membrane as a helical segment. Topologically, residues 148 to 503 (CHNRTVIHHR…QLSQQEGIKM (356 aa)) are cytoplasmic. S165 carries the phosphoserine modification. In terms of domain architecture, GS spans 175–204 (TTLKDLIYDMTTSGSGSGLPLLVQRTIART). Residues T185 and T186 each carry the phosphothreonine; by TGFBR2 modification. S187, S189, and S191 each carry phosphoserine; by TGFBR2. The FKBP1A-binding motif lies at 193-194 (LP). In terms of domain architecture, Protein kinase spans 205–495 (IVLQESIGKG…LRIKKTLSQL (291 aa)). ATP is bound by residues 211 to 219 (IGKGRFGEV) and K232. Residue K268 forms a Glycyl lysine isopeptide (Lys-Gly) (interchain with G-Cter in ubiquitin) linkage. D333 (proton acceptor) is an active-site residue. Residue K391 forms a Glycyl lysine isopeptide (Lys-Gly) (interchain with G-Cter in SUMO) linkage.

This sequence belongs to the protein kinase superfamily. TKL Ser/Thr protein kinase family. TGFB receptor subfamily. In terms of assembly, homodimer; in the endoplasmic reticulum but also at the cell membrane. Heterohexamer; TGFB1, TGFB2 and TGFB3 homodimeric ligands assemble a functional receptor composed of two TGFBR1 and TGFBR2 heterodimers to form a ligand-receptor heterohexamer. The respective affinity of TGBRB1 and TGFBR2 for the ligands may modulate the kinetics of assembly of the receptor and may explain the different biological activities of TGFB1, TGFB2 and TGFB3. Component of a complex composed of TSC22D1 (via N-terminus), TGFBR1 and TGFBR2; the interaction between TSC22D1 and TGFBR1 is inhibited by SMAD7 and promoted by TGFB1. Interacts with CD109; inhibits TGF-beta receptor activation in keratinocytes. Interacts with RBPMS. Interacts (unphosphorylated) with FKBP1A; prevents TGFBR1 phosphorylation by TGFBR2 and stabilizes it in the inactive conformation. Interacts with SMAD2, SMAD3 and ZFYVE9; ZFYVE9 recruits SMAD2 and SMAD3 to the TGF-beta receptor. Interacts with TRAF6 and MAP3K7; induces MAP3K7 activation by TRAF6. Interacts with PARD6A; involved in TGF-beta induced epithelial to mesenchymal transition. Interacts with NEDD4L. Interacts with SMAD7, SMURF1 and SMURF2; SMAD7 recruits NEDD4L, SMURF1 and SMURF2 to the TGF-beta receptor. Interacts with USP15 and VPS39. Interacts with SDCBP (via C-terminus). Interacts with CAV1 and this interaction is impaired in the presence of SDCBP. Interacts with APPL1; interaction is TGF beta dependent; mediates trafficking of the TGFBR1 from the endosomes to the nucleus via microtubules in a TRAF6-dependent manner. Interacts with GPR50; this interaction promotes the constitutive activation of SMAD signaling pathway. Requires Mg(2+) as cofactor. The cofactor is Mn(2+). Post-translationally, phosphorylated at basal levels in the absence of ligand. Activated upon phosphorylation by TGFBR2, mainly in the GS domain. Phosphorylation in the GS domain abrogates FKBP1A-binding. N-Glycosylated. In terms of processing, ubiquitinated; undergoes ubiquitination catalyzed by several E3 ubiquitin ligases including SMURF1, SMURF2 and NEDD4L2. Results in the proteasomal and/or lysosomal degradation of the receptor thereby negatively regulating its activity. Deubiquitinated by USP15, leading to stabilization of the protein and enhanced TGF-beta signal. Its ubiquitination and proteasome-mediated degradation is negatively regulated by SDCBP. Ubiquitinated by BFAR via'Lys-63'-linked ubiquitination at Lys-268, leading to TGF-beta signaling activation.

It localises to the cell membrane. It is found in the cell junction. The protein resides in the tight junction. The protein localises to the membrane raft. Its subcellular location is the cell surface. The enzyme catalyses L-threonyl-[receptor-protein] + ATP = O-phospho-L-threonyl-[receptor-protein] + ADP + H(+). The catalysed reaction is L-seryl-[receptor-protein] + ATP = O-phospho-L-seryl-[receptor-protein] + ADP + H(+). With respect to regulation, kept in an inactive conformation by FKBP1A preventing receptor activation in absence of ligand. CD109 is another inhibitor of the receptor. Transmembrane serine/threonine kinase forming with the TGF-beta type II serine/threonine kinase receptor, TGFBR2, the non-promiscuous receptor for the TGF-beta cytokines TGFB1, TGFB2 and TGFB3. Transduces the TGFB1, TGFB2 and TGFB3 signal from the cell surface to the cytoplasm and is thus regulating a plethora of physiological and pathological processes including cell cycle arrest in epithelial and hematopoietic cells, control of mesenchymal cell proliferation and differentiation, wound healing, extracellular matrix production, immunosuppression and carcinogenesis. The formation of the receptor complex composed of 2 TGFBR1 and 2 TGFBR2 molecules symmetrically bound to the cytokine dimer results in the phosphorylation and the activation of TGFBR1 by the constitutively active TGFBR2. Activated TGFBR1 phosphorylates SMAD2 which dissociates from the receptor and interacts with SMAD4. The SMAD2-SMAD4 complex is subsequently translocated to the nucleus where it modulates the transcription of the TGF-beta-regulated genes. This constitutes the canonical SMAD-dependent TGF-beta signaling cascade. Also involved in non-canonical, SMAD-independent TGF-beta signaling pathways. For instance, TGFBR1 induces TRAF6 autoubiquitination which in turn results in MAP3K7 ubiquitination and activation to trigger apoptosis. Also regulates epithelial to mesenchymal transition through a SMAD-independent signaling pathway through PARD6A phosphorylation and activation. The sequence is that of TGF-beta receptor type-1 (Tgfbr1) from Mus musculus (Mouse).